A 398-amino-acid polypeptide reads, in one-letter code: S-adenosylmethionine synthase (398 aa).

Histidine 16 serves as a coordination point for ATP. Aspartate 18 serves as a coordination point for Mg(2+). Residue glutamate 51 participates in K(+) binding. Residues glutamate 64 and glutamine 108 each coordinate L-methionine. The segment at 108–118 is flexible loop; sequence QSADIAQGVDA. ATP contacts are provided by residues 176–178, 242–243, aspartate 251, 257–258, alanine 274, and lysine 278; these read DSK, KF, and RK. An L-methionine-binding site is contributed by aspartate 251. Lysine 282 contributes to the L-methionine binding site.

It belongs to the AdoMet synthase family. In terms of assembly, homotetramer; dimer of dimers. It depends on Mg(2+) as a cofactor. Requires K(+) as cofactor.

The protein localises to the cytoplasm. It catalyses the reaction L-methionine + ATP + H2O = S-adenosyl-L-methionine + phosphate + diphosphate. The protein operates within amino-acid biosynthesis; S-adenosyl-L-methionine biosynthesis; S-adenosyl-L-methionine from L-methionine: step 1/1. Its function is as follows. Catalyzes the formation of S-adenosylmethionine (AdoMet) from methionine and ATP. The overall synthetic reaction is composed of two sequential steps, AdoMet formation and the subsequent tripolyphosphate hydrolysis which occurs prior to release of AdoMet from the enzyme. This Nitrobacter hamburgensis (strain DSM 10229 / NCIMB 13809 / X14) protein is S-adenosylmethionine synthase.